Reading from the N-terminus, the 188-residue chain is Small ribosomal subunit protein uS7 (188 aa).

It belongs to the universal ribosomal protein uS7 family. As to quaternary structure, part of the 30S ribosomal subunit.

In terms of biological role, one of the primary rRNA binding proteins, it binds directly to 16S rRNA where it nucleates assembly of the head domain of the 30S subunit. Is located at the subunit interface close to the decoding center. This chain is Small ribosomal subunit protein uS7, found in Methanococcus aeolicus (strain ATCC BAA-1280 / DSM 17508 / OCM 812 / Nankai-3).